A 237-amino-acid polypeptide reads, in one-letter code: Large ribosomal subunit protein uL3 (237 aa).

Disordered stretches follow at residues 133–155 and 213–237; these read ASHGNSITHRSHGSTGQRQDPGK and PENAPKPAGLRAGAKAEAAATEGAE. The span at 135-150 shows a compositional bias: polar residues; that stretch reads HGNSITHRSHGSTGQR. Position 151 is an N5-methylglutamine (Q151). Positions 220-237 are enriched in low complexity; the sequence is AGLRAGAKAEAAATEGAE.

This sequence belongs to the universal ribosomal protein uL3 family. Part of the 50S ribosomal subunit. Forms a cluster with proteins L14 and L19. Post-translationally, methylated by PrmB.

Functionally, one of the primary rRNA binding proteins, it binds directly near the 3'-end of the 23S rRNA, where it nucleates assembly of the 50S subunit. This Brucella suis biovar 1 (strain 1330) protein is Large ribosomal subunit protein uL3.